A 180-amino-acid polypeptide reads, in one-letter code: MFNLQKRINGNNEDGRYLETRIAVRDKLLAQELQQLETALRDQKQKLWHLEVPSTSCLHELELTVTPQEGIYRGGKFRFKITVPPEYNNVPPVVKCLTKVWHPNINEDGSICLSILRQNSLDQYGWRPTRNLTDVVHGLVSLFNDLMDFNDALNIQAAQMWSQNRESFNHRVREYISRYC.

A UBC core domain is found at 24-180 (VRDKLLAQEL…RVREYISRYC (157 aa)). Cys-112 serves as the catalytic Glycyl thioester intermediate.

Belongs to the ubiquitin-conjugating enzyme family. UBC12 subfamily.

Its subcellular location is the cytoplasm. The enzyme catalyses [E1 NEDD8-activating enzyme]-S-[NEDD8 protein]-yl-L-cysteine + [E2 NEDD8-conjugating enzyme]-L-cysteine = [E1 NEDD8-activating enzyme]-L-cysteine + [E2 NEDD8-conjugating enzyme]-S-[NEDD8-protein]-yl-L-cysteine.. The protein operates within protein modification; protein neddylation. Its function is as follows. Accepts the ubiquitin-like protein NEDD8 from the uba-3-ula-1 E1 complex and catalyzes its covalent attachment to other proteins. Plays a role in male tail tip morphogenesis. This Caenorhabditis elegans protein is NEDD8-conjugating enzyme ubc-12.